The following is a 353-amino-acid chain: Nicotinate-nucleotide--dimethylbenzimidazole phosphoribosyltransferase (353 aa).

The active-site Proton acceptor is the Glu-320.

The protein belongs to the CobT family.

The catalysed reaction is 5,6-dimethylbenzimidazole + nicotinate beta-D-ribonucleotide = alpha-ribazole 5'-phosphate + nicotinate + H(+). It functions in the pathway nucleoside biosynthesis; alpha-ribazole biosynthesis; alpha-ribazole from 5,6-dimethylbenzimidazole: step 1/2. Catalyzes the synthesis of alpha-ribazole-5'-phosphate from nicotinate mononucleotide (NAMN) and 5,6-dimethylbenzimidazole (DMB). The sequence is that of Nicotinate-nucleotide--dimethylbenzimidazole phosphoribosyltransferase from Pseudoalteromonas translucida (strain TAC 125).